The primary structure comprises 683 residues: ATP-dependent zinc metalloprotease FtsH 2 (683 aa).

Residues methionine 1–asparagine 12 show a composition bias toward polar residues. A disordered region spans residues methionine 1–proline 21. Topologically, residues methionine 1–arginine 28 are cytoplasmic. A helical transmembrane segment spans residues leucine 29–methionine 49. Over glycine 50–tryptophan 136 the chain is Periplasmic. A helical membrane pass occupies residues glycine 137–leucine 157. Topologically, residues arginine 158–serine 683 are cytoplasmic. Glycine 228–threonine 235 serves as a coordination point for ATP. Histidine 450 provides a ligand contact to Zn(2+). Residue glutamate 451 is part of the active site. Positions 454 and 526 each coordinate Zn(2+). The disordered stretch occupies residues valine 627–serine 683. Residues histidine 655–serine 669 are compositionally biased toward acidic residues. A compositionally biased stretch (low complexity) spans glycine 672–serine 683.

This sequence in the central section; belongs to the AAA ATPase family. It in the C-terminal section; belongs to the peptidase M41 family. In terms of assembly, homohexamer. Requires Zn(2+) as cofactor.

It is found in the cell inner membrane. Its function is as follows. Acts as a processive, ATP-dependent zinc metallopeptidase for both cytoplasmic and membrane proteins. Plays a role in the quality control of integral membrane proteins. The polypeptide is ATP-dependent zinc metalloprotease FtsH 2 (Salinibacter ruber (strain M8)).